Here is a 699-residue protein sequence, read N- to C-terminus: Receptor-type tyrosine-protein phosphatase epsilon (699 aa).

The first 19 residues, 1–19 (MEPFCPLLLASFSLSLARA), serve as a signal peptide directing secretion. A compositionally biased stretch (low complexity) spans 20–36 (GQGNDTTPTESNWTSTT). The tract at residues 20–40 (GQGNDTTPTESNWTSTTAGPP) is disordered. Residues 20–45 (GQGNDTTPTESNWTSTTAGPPDPGAS) lie on the Extracellular side of the membrane. Asn-23 and Asn-31 each carry an N-linked (GlcNAc...) asparagine glycan. The chain crosses the membrane as a helical span at residues 46 to 68 (QPLLTWLLLPLLLLLFLLAAYFF). Over 69–699 (RFRKQRKAVV…DIFSDYANFK (631 aa)) the chain is Cytoplasmic. Tyrosine-protein phosphatase domains are found at residues 134-393 (FREE…LLEY) and 425-688 (LEEE…VQDF). Substrate is bound by residues Asp-302, 334-340 (CSAGVGR), and Gln-378. Catalysis depends on Cys-334, which acts as the Phosphocysteine intermediate. Cys-629 (phosphocysteine intermediate) is an active-site residue. Tyr-695 is subject to Phosphotyrosine.

Belongs to the protein-tyrosine phosphatase family. Receptor class 4 subfamily. In terms of assembly, monomer. Isoform 2: Homodimer. Can form oligomers. Dimerization is increased by oxidative stress and decreased by EGFR. Isoform 2 interacts with GRB2. A catalytically active cytoplasmic form (p65) is produced by proteolytic cleavage of either isoform 1, isoform 2 or isoform 3. In terms of processing, phosphorylated on tyrosine residues by tyrosine kinase Neu. Post-translationally, glycosylated. As to expression, isoform 2 is expressed in the spleen and thymus (at protein level). Detected in fibroblasts, myeloid cells, macrophages, and T-cells but not in B-cell lines. Isoform 1 and isoform 2 are expressed predominantly in the brain, testes, and lungs, with lower levels present in lymph nodes, thymus, spleen, heart and mammary glands. Isoform 1 is expressed in osteoclasts and not in osteoblasts and its expression is related to osteoclast differentiation. It is also expressed in the erythrocytes. Isoform 2 is strongly expressed in skeletal muscle and L6 skeletal muscle cell line.

The protein localises to the cell membrane. The protein resides in the cytoplasm. It carries out the reaction O-phospho-L-tyrosyl-[protein] + H2O = L-tyrosyl-[protein] + phosphate. Inhibited by alendronate (ALN), orthovanadate, and phenylarsine oxide (PAO). Its function is as follows. Acts as a negative regulator of insulin receptor (IR) signaling and is involved in insulin-induced glucose metabolism mainly through direct dephosphorylation and inactivation of IR in hepatocytes and liver. Plays a critical role in signaling transduction pathways and phosphoprotein network topology in red blood cells. May play a role in osteoclast formation and function. Functionally, acts as a negative regulator of insulin receptor (IR) signaling in skeletal muscle. Regulates insulin-induced tyrosine phosphorylation of insulin receptor (IR) and insulin receptor substrate 1 (IRS-1), phosphorylation of protein kinase B and glycogen synthase kinase-3 and insulin induced stimulation of glucose uptake. In terms of biological role, isoform 1 and isoform 2 act as a negative regulator of FceRI-mediated signal transduction leading to cytokine production and degranulation, most likely by acting at the level of SYK to affect downstream events such as phosphorylation of SLP76 and LAT and mobilization of Ca(2+). This Mus musculus (Mouse) protein is Receptor-type tyrosine-protein phosphatase epsilon (Ptpre).